A 150-amino-acid chain; its full sequence is Large ribosomal subunit protein bL9 (150 aa).

Belongs to the bacterial ribosomal protein bL9 family.

Its function is as follows. Binds to the 23S rRNA. In Moorella thermoacetica (strain ATCC 39073 / JCM 9320), this protein is Large ribosomal subunit protein bL9.